Reading from the N-terminus, the 97-residue chain is Large ribosomal subunit protein bL27 (97 aa).

The propeptide occupies 1–12; it reads MIKLNLSNLQHF. The interval 13–38 is disordered; sequence AHKKGGGSTSNGRDSQAKRLGAKAAD.

It belongs to the bacterial ribosomal protein bL27 family. Post-translationally, the N-terminus is cleaved by ribosomal processing cysteine protease Prp.

This chain is Large ribosomal subunit protein bL27, found in Streptococcus equi subsp. equi (strain 4047).